We begin with the raw amino-acid sequence, 332 residues long: Tryptophan--tRNA ligase (332 aa).

ATP contacts are provided by residues K13 to S15 and G21 to N22. Residues P14–N22 carry the 'HIGH' region motif. D137 is an L-tryptophan binding site. Residues G149–D151, I188, and K197–S201 contribute to the ATP site. The 'KMSKS' region motif lies at K197–S201.

The protein belongs to the class-I aminoacyl-tRNA synthetase family. Homodimer.

It is found in the cytoplasm. It carries out the reaction tRNA(Trp) + L-tryptophan + ATP = L-tryptophyl-tRNA(Trp) + AMP + diphosphate + H(+). Catalyzes the attachment of tryptophan to tRNA(Trp). In Clostridium perfringens (strain 13 / Type A), this protein is Tryptophan--tRNA ligase.